We begin with the raw amino-acid sequence, 319 residues long: Acyl-coenzyme A thioesterase 8 (319 aa).

The interval 1–20 (MSSPQAPEDGQGCGDRGDPP) is disordered. Active-site charge relay system residues include D232, S254, and Q304. The Microbody targeting signal motif lies at 317–319 (SKL).

It belongs to the C/M/P thioester hydrolase family. Homodimer. In terms of assembly, (Microbial infection) Interacts with human immunodeficiency virus (HIV-1) Nef (via middle region); this interaction enhances ACOT8 Acyl-CoA thioesterase activity and occurs in a Nef myristoylation-independent manner. According to a second report, the interaction with HIV-1 Nef occurs in a Nef myristoylation-independent manner but does not enhance ACOT8 Acyl-CoA thioesterase activity. As to expression, detected in a T-cell line (at protein level). Ubiquitous.

The protein localises to the peroxisome matrix. The enzyme catalyses choloyl-CoA + H2O = cholate + CoA + H(+). The catalysed reaction is chenodeoxycholoyl-CoA + H2O = chenodeoxycholate + CoA + H(+). It carries out the reaction acetyl-CoA + H2O = acetate + CoA + H(+). It catalyses the reaction butanoyl-CoA + H2O = butanoate + CoA + H(+). The enzyme catalyses 2-methylpropanoyl-CoA + H2O = 2-methylpropanoate + CoA + H(+). The catalysed reaction is hexanoyl-CoA + H2O = hexanoate + CoA + H(+). It carries out the reaction octanoyl-CoA + H2O = octanoate + CoA + H(+). It catalyses the reaction decanoyl-CoA + H2O = decanoate + CoA + H(+). The enzyme catalyses dodecanoyl-CoA + H2O = dodecanoate + CoA + H(+). The catalysed reaction is tetradecanoyl-CoA + H2O = tetradecanoate + CoA + H(+). It carries out the reaction hexadecanoyl-CoA + H2O = hexadecanoate + CoA + H(+). It catalyses the reaction octadecanoyl-CoA + H2O = octadecanoate + CoA + H(+). The enzyme catalyses malonyl-CoA + H2O = malonate + CoA + H(+). The catalysed reaction is acetoacetyl-CoA + H2O = acetoacetate + CoA + H(+). It carries out the reaction propanoyl-CoA + H2O = propanoate + CoA + H(+). It catalyses the reaction succinyl-CoA + H2O = succinate + CoA + H(+). The enzyme catalyses glutaryl-CoA + H2O = glutarate + CoA + H(+). The catalysed reaction is hexanedioyl-CoA + H2O = hexanedioate + CoA + H(+). It carries out the reaction octanedioyl-CoA + H2O = octanedioate + CoA + H(+). It catalyses the reaction decanedioyl-CoA + H2O = decanedioate + CoA + H(+). The enzyme catalyses dodecanedioyl-CoA + H2O = dodecanedioate + CoA + H(+). The catalysed reaction is (9Z)-tetradecenoyl-CoA + H2O = (9Z)-tetradecenoate + CoA + H(+). It carries out the reaction (9Z)-hexadecenoyl-CoA + H2O = (9Z)-hexadecenoate + CoA + H(+). It catalyses the reaction (9Z)-octadecenoyl-CoA + H2O = (9Z)-octadecenoate + CoA + H(+). The enzyme catalyses (9Z,12Z)-octadecadienoyl-CoA + H2O = (9Z,12Z)-octadecadienoate + CoA + H(+). The catalysed reaction is eicosanoyl-CoA + H2O = eicosanoate + CoA + H(+). It carries out the reaction (5Z,8Z,11Z,14Z)-eicosatetraenoyl-CoA + H2O = (5Z,8Z,11Z,14Z)-eicosatetraenoate + CoA + H(+). It catalyses the reaction 4,8-dimethylnonanoyl-CoA + H2O = 4,8-dimethylnonanoate + CoA + H(+). The enzyme catalyses 2,6-dimethylheptanoyl-CoA + H2O = 2,6-dimethylheptanoate + CoA + H(+). The catalysed reaction is (3S)-3-hydroxy-3-methylglutaryl-CoA + H2O = 3-hydroxy-3-methylglutarate + CoA + H(+). It carries out the reaction 3alpha,7alpha,12alpha-trihydroxy-5beta-cholestan-26-oyl-CoA + H2O = 3alpha,7alpha,12alpha-trihydroxy-5beta-cholestan-26-oate + CoA + H(+). It catalyses the reaction 2-methyloctadecanoyl-CoA + H2O = 2-methyloctadecanoate + CoA + H(+). The enzyme catalyses prostaglandin F2alpha-CoA + H2O = prostaglandin F2alpha + CoA + H(+). The protein operates within lipid metabolism; fatty acid metabolism. Inhibited by CoASH (IC(50)=10-15 uM). Also inhibited by cysteine-reactive agents. In terms of biological role, catalyzes the hydrolysis of acyl-CoAs into free fatty acids and coenzyme A (CoASH), regulating their respective intracellular levels. Displays no strong substrate specificity with respect to the carboxylic acid moiety of Acyl-CoAs. Hydrolyzes medium length (C2 to C20) straight-chain, saturated and unsaturated acyl-CoAS but is inactive towards substrates with longer aliphatic chains. Moreover, it catalyzes the hydrolysis of CoA esters of bile acids, such as choloyl-CoA and chenodeoxycholoyl-CoA and competes with bile acid CoA:amino acid N-acyltransferase (BAAT). Is also able to hydrolyze CoA esters of dicarboxylic acids. It is involved in the metabolic regulation of peroxisome proliferation. (Microbial infection) May mediate Nef-induced down-regulation of CD4 cell-surface expression. The protein is Acyl-coenzyme A thioesterase 8 (ACOT8) of Homo sapiens (Human).